Reading from the N-terminus, the 434-residue chain is Calcium uptake protein 2, mitochondrial (434 aa).

Residues 1–22 (MAAAAGSCARVAAWGGKLRRGL) constitute a mitochondrion transit peptide. The EF-hand 1 domain occupies 172–207 (KPHSGFHVAFKMLDTDGNEMIEKREFFKLQKIISKQ). 6 residues coordinate Ca(2+): aspartate 185, aspartate 187, asparagine 189, methionine 191, glutamate 193, and glutamate 196. Serine 205 carries the phosphoserine modification. Positions 227–262 (EPEINTTLQMRFFGKRGQRKLHYKEFRRFMENLQTE) constitute an EF-hand 2; degenerate domain. One can recognise an EF-hand 3; degenerate domain in the interval 293–328 (TENKDIYWKNVREKLSAGESISLDEFKSFCHFTTHL). Residues 362 to 397 (LSNNILDTVFKIFDLDGDECLSHEEFLGVLKNRMHR) form the EF-hand 4 domain. Residues aspartate 375, aspartate 377, aspartate 379, cysteine 381, and glutamate 386 each coordinate Ca(2+).

Belongs to the MICU1 family. MICU2 subfamily. In terms of assembly, heterodimer; disulfide-linked; heterodimerizes with MICU1. Component of the uniplex complex, composed of MCU, EMRE/SMDT1, MICU1 and MICU2 in a 4:4:1:1 stoichiometry.

The protein localises to the mitochondrion intermembrane space. It localises to the mitochondrion inner membrane. Its function is as follows. Calcium sensor of the mitochondrial calcium uniporter (MCU) channel, which senses calcium level via its EF-hand domains. MICU1 and MICU2 form a disulfide-linked heterodimer that stimulates and inhibits MCU activity, depending on the concentration of calcium. At low calcium levels, MICU1 occludes the pore of the MCU channel, preventing mitochondrial calcium uptake. At higher calcium levels, calcium-binding to MICU1 and MICU2 induces a conformational change that weakens MCU-MICU1 interactions and moves the MICU1-MICU2 heterodimer away from the pore, allowing calcium permeation through the MCU channel. This Homo sapiens (Human) protein is Calcium uptake protein 2, mitochondrial.